Here is an 852-residue protein sequence, read N- to C-terminus: Bifunctional uridylyltransferase/uridylyl-removing enzyme (852 aa).

A uridylyltransferase region spans residues 1-318; that stretch reads MPENLSSALE…STPVRVTLRI (318 aa). The uridylyl-removing stretch occupies residues 319–672; it reads DDDYIQVNNQ…SRILPQSDSF (354 aa). Positions 436–558 constitute an HD domain; the sequence is VDDHILAVVR…VQTHERLSAL (123 aa). ACT domains lie at 673-757 and 785-852; these read QVMV…SCNR and SVEI…EQLA.

It belongs to the GlnD family. Requires Mg(2+) as cofactor.

The catalysed reaction is [protein-PII]-L-tyrosine + UTP = [protein-PII]-uridylyl-L-tyrosine + diphosphate. The enzyme catalyses [protein-PII]-uridylyl-L-tyrosine + H2O = [protein-PII]-L-tyrosine + UMP + H(+). Its activity is regulated as follows. Uridylyltransferase (UTase) activity is inhibited by glutamine, while glutamine activates uridylyl-removing (UR) activity. Functionally, modifies, by uridylylation and deuridylylation, the PII regulatory proteins (GlnB and homologs), in response to the nitrogen status of the cell that GlnD senses through the glutamine level. Under low glutamine levels, catalyzes the conversion of the PII proteins and UTP to PII-UMP and PPi, while under higher glutamine levels, GlnD hydrolyzes PII-UMP to PII and UMP (deuridylylation). Thus, controls uridylylation state and activity of the PII proteins, and plays an important role in the regulation of nitrogen assimilation and metabolism. The sequence is that of Bifunctional uridylyltransferase/uridylyl-removing enzyme from Neisseria gonorrhoeae (strain ATCC 700825 / FA 1090).